The following is a 566-amino-acid chain: 3'-5' exoribonuclease parn-1 (566 aa).

Residues aspartate 29, glutamate 31, aspartate 283, and aspartate 379 each contribute to the a divalent metal cation site.

The protein belongs to the CAF1 family. Requires a divalent metal cation as cofactor. As to expression, expressed in germline cells.

The protein resides in the cytoplasm. In terms of biological role, involved in transcriptome surveillance. Required for piwi-interacting RNAs (piRNAs) 3'-end trimming, which is important for both fertility and piRNA-directed gene silencing. Has 3' to 5' exonuclease activity in vitro. The chain is 3'-5' exoribonuclease parn-1 from Caenorhabditis elegans.